The sequence spans 206 residues: uncharacterized protein (206 aa).

It is found in the plastid. The protein resides in the cyanelle. This is an uncharacterized protein from Cyanophora paradoxa.